The sequence spans 162 residues: 2-C-methyl-D-erythritol 2,4-cyclodiphosphate synthase (162 aa).

A divalent metal cation contacts are provided by Asp-10 and His-12. 4-CDP-2-C-methyl-D-erythritol 2-phosphate contacts are provided by residues Asp-10 to His-12 and His-36 to Ser-37. Residue His-44 coordinates a divalent metal cation. 4-CDP-2-C-methyl-D-erythritol 2-phosphate-binding positions include Asp-58–Gly-60, Phe-63–Asp-67, and Arg-144.

This sequence belongs to the IspF family. As to quaternary structure, homotrimer. The cofactor is a divalent metal cation.

It carries out the reaction 4-CDP-2-C-methyl-D-erythritol 2-phosphate = 2-C-methyl-D-erythritol 2,4-cyclic diphosphate + CMP. Its pathway is isoprenoid biosynthesis; isopentenyl diphosphate biosynthesis via DXP pathway; isopentenyl diphosphate from 1-deoxy-D-xylulose 5-phosphate: step 4/6. Its function is as follows. Involved in the biosynthesis of isopentenyl diphosphate (IPP) and dimethylallyl diphosphate (DMAPP), two major building blocks of isoprenoid compounds. Catalyzes the conversion of 4-diphosphocytidyl-2-C-methyl-D-erythritol 2-phosphate (CDP-ME2P) to 2-C-methyl-D-erythritol 2,4-cyclodiphosphate (ME-CPP) with a corresponding release of cytidine 5-monophosphate (CMP). The sequence is that of 2-C-methyl-D-erythritol 2,4-cyclodiphosphate synthase from Burkholderia mallei (strain NCTC 10247).